The chain runs to 282 residues: Bifunctional protein FolD (282 aa).

NADP(+) is bound by residues 166–168 and serine 191; that span reads GRS.

It belongs to the tetrahydrofolate dehydrogenase/cyclohydrolase family. Homodimer.

It carries out the reaction (6R)-5,10-methylene-5,6,7,8-tetrahydrofolate + NADP(+) = (6R)-5,10-methenyltetrahydrofolate + NADPH. The enzyme catalyses (6R)-5,10-methenyltetrahydrofolate + H2O = (6R)-10-formyltetrahydrofolate + H(+). It functions in the pathway one-carbon metabolism; tetrahydrofolate interconversion. Its function is as follows. Catalyzes the oxidation of 5,10-methylenetetrahydrofolate to 5,10-methenyltetrahydrofolate and then the hydrolysis of 5,10-methenyltetrahydrofolate to 10-formyltetrahydrofolate. In Acidovorax ebreus (strain TPSY) (Diaphorobacter sp. (strain TPSY)), this protein is Bifunctional protein FolD.